A 208-amino-acid polypeptide reads, in one-letter code: Small ribosomal subunit protein uS4 (208 aa).

The S4 RNA-binding domain occupies 96–159; the sequence is SRLDNIVYRL…KKNEKVLEAL (64 aa).

Belongs to the universal ribosomal protein uS4 family. Part of the 30S ribosomal subunit. Contacts protein S5. The interaction surface between S4 and S5 is involved in control of translational fidelity.

Its function is as follows. One of the primary rRNA binding proteins, it binds directly to 16S rRNA where it nucleates assembly of the body of the 30S subunit. Functionally, with S5 and S12 plays an important role in translational accuracy. This chain is Small ribosomal subunit protein uS4, found in Mycoplasma capricolum subsp. capricolum (strain California kid / ATCC 27343 / NCTC 10154).